The sequence spans 103 residues: Putative membrane protein insertion efficiency factor (103 aa).

The protein belongs to the UPF0161 family.

The protein localises to the cell inner membrane. In terms of biological role, could be involved in insertion of integral membrane proteins into the membrane. The protein is Putative membrane protein insertion efficiency factor of Chlamydia abortus (strain DSM 27085 / S26/3) (Chlamydophila abortus).